Reading from the N-terminus, the 277-residue chain is MAIVKMKPTSAGRRGMVRVVTEGLHKGAPYAPLLEKKNSTAGRNNNGHITTRHKGGGHKHHYRVVDFKRNKDGIPAKVERIEYDPNRTAFIALLCYADGERRYIIAPRGIQAGAVLVSGAEAAIKVGNTLPIRNIPVGTTIHCIEMKPGKGAQIARSAGASAVLLAKEGAYAQVRLRSGEVRKINVNCRATIGEVGNEEQSLKKIGKAGANRWRGIRPTVRGVVMNPVDHPHGGGEGRTGEAREPVSPWGTPAKGYRTRNNKRTDNMIVRRRYSNKG.

2 disordered regions span residues Lys-37–His-60 and Val-223–Asp-265. Positions Ser-39–Ile-49 are enriched in polar residues. The span at Thr-50–His-60 shows a compositional bias: basic residues. Over residues Asp-229–Glu-244 the composition is skewed to basic and acidic residues.

Belongs to the universal ribosomal protein uL2 family. Part of the 50S ribosomal subunit. Forms a bridge to the 30S subunit in the 70S ribosome.

One of the primary rRNA binding proteins. Required for association of the 30S and 50S subunits to form the 70S ribosome, for tRNA binding and peptide bond formation. It has been suggested to have peptidyltransferase activity; this is somewhat controversial. Makes several contacts with the 16S rRNA in the 70S ribosome. In Neisseria meningitidis serogroup A / serotype 4A (strain DSM 15465 / Z2491), this protein is Large ribosomal subunit protein uL2.